Here is a 259-residue protein sequence, read N- to C-terminus: Major prion protein (259 aa).

The signal sequence occupies residues 1–24 (MGKIQLGYWILVLFIVTWSDLGLC). The interaction with GRB2, ERI3 and SYN1 stretch occupies residues 25–235 (KKPKPRPGGG…EYEAAAQRAY (211 aa)). Residues 29-110 (PRPGGGWNSG…GYNKWKPDKP (82 aa)) are disordered. 8 residues coordinate Cu(2+): Gly-63, Gly-64, His-72, Gly-74, His-82, Gly-84, His-92, and Gly-94. The segment covering 91 to 101 (PHGGSNWGQGG) has biased composition (gly residues). The cysteines at positions 184 and 219 are disulfide-linked. Residues Asn-186 and Asn-202 are each glycosylated (N-linked (GlcNAc...) asparagine). Residue Asn-236 is the site of GPI-anchor amidated asparagine attachment. Positions 237 to 259 (MAFFSAPPVTLLFLSFLIFLIVS) are cleaved as a propeptide — removed in mature form.

Belongs to the prion family. As to quaternary structure, monomer and homodimer. Has a tendency to aggregate into amyloid fibrils containing a cross-beta spine, formed by a steric zipper of superposed beta-strands. Soluble oligomers may represent an intermediate stage on the path to fibril formation. Copper binding may promote oligomerization. Interacts with GRB2, APP, ERI3/PRNPIP and SYN1. Mislocalized cytosolically exposed PrP interacts with MGRN1; this interaction alters MGRN1 subcellular location and causes lysosomal enlargement. Interacts with KIAA1191.

Its subcellular location is the cell membrane. It is found in the golgi apparatus. Its primary physiological function is unclear. Has cytoprotective activity against internal or environmental stresses. May play a role in neuronal development and synaptic plasticity. May be required for neuronal myelin sheath maintenance. May play a role in iron uptake and iron homeostasis. Soluble oligomers are toxic to cultured neuroblastoma cells and induce apoptosis (in vitro). Association with GPC1 (via its heparan sulfate chains) targets PRNP to lipid rafts. Also provides Cu(2+) or Zn(2+) for the ascorbate-mediated GPC1 deaminase degradation of its heparan sulfate side chains. The chain is Major prion protein (PRNP) from Trichosurus vulpecula (Brush-tailed possum).